Here is a 383-residue protein sequence, read N- to C-terminus: S-adenosylmethionine synthase (383 aa).

ATP is bound at residue His-16. Asp-18 lines the Mg(2+) pocket. Glu-44 contacts K(+). 2 residues coordinate L-methionine: Glu-57 and Gln-98. The tract at residues Gln-98 to Ile-108 is flexible loop. Residues Asp-158–Lys-160, Arg-226–Phe-227, Asp-235, Arg-241–Lys-242, Ala-258, and Lys-262 each bind ATP. Asp-235 lines the L-methionine pocket. An L-methionine-binding site is contributed by Lys-266.

It belongs to the AdoMet synthase family. In terms of assembly, homotetramer; dimer of dimers. Mg(2+) serves as cofactor. It depends on K(+) as a cofactor.

The protein localises to the cytoplasm. The enzyme catalyses L-methionine + ATP + H2O = S-adenosyl-L-methionine + phosphate + diphosphate. It participates in amino-acid biosynthesis; S-adenosyl-L-methionine biosynthesis; S-adenosyl-L-methionine from L-methionine: step 1/1. Functionally, catalyzes the formation of S-adenosylmethionine (AdoMet) from methionine and ATP. The overall synthetic reaction is composed of two sequential steps, AdoMet formation and the subsequent tripolyphosphate hydrolysis which occurs prior to release of AdoMet from the enzyme. The sequence is that of S-adenosylmethionine synthase from Fusobacterium nucleatum subsp. nucleatum (strain ATCC 25586 / DSM 15643 / BCRC 10681 / CIP 101130 / JCM 8532 / KCTC 2640 / LMG 13131 / VPI 4355).